Consider the following 130-residue polypeptide: Small ribosomal subunit protein uS9 (130 aa).

Belongs to the universal ribosomal protein uS9 family.

This chain is Small ribosomal subunit protein uS9, found in Variovorax paradoxus (strain S110).